A 427-amino-acid chain; its full sequence is UDP-N-acetyl-D-mannosamine dehydrogenase (427 aa).

NAD(+)-binding residues include Tyr-19, Ile-20, Asp-39, Arg-44, Thr-91, and Thr-130. Residues Arg-155, Val-156, Lys-207, Asn-211, Arg-214, His-245, Arg-247, and Gly-258 each coordinate UDP-N-acetyl-alpha-D-mannosaminouronate. The Proton donor/acceptor role is filled by Lys-207. Cys-261 (nucleophile) is an active-site residue. Tyr-318 and Lys-319 together coordinate UDP-N-acetyl-alpha-D-mannosaminouronate. Residue Arg-326 coordinates NAD(+). Lys-404 serves as a coordination point for UDP-N-acetyl-alpha-D-mannosaminouronate.

The protein belongs to the UDP-glucose/GDP-mannose dehydrogenase family. Homotetramer; probably dimer of dimers.

The enzyme catalyses UDP-N-acetyl-alpha-D-mannosamine + 2 NAD(+) + H2O = UDP-N-acetyl-alpha-D-mannosaminouronate + 2 NADH + 3 H(+). Catalyzes the four-electron oxidation of UDP-N-acetyl-D-mannosamine (UDP-ManNAc), reducing NAD(+) and releasing UDP-N-acetylmannosaminuronic acid (UDP-ManNAcA). The chain is UDP-N-acetyl-D-mannosamine dehydrogenase (wecC) from Methanococcus maripaludis (strain C7 / ATCC BAA-1331).